An 806-amino-acid polypeptide reads, in one-letter code: MKVSYNWLKDYLDLTTAPEALAEKITRTGIEVADVAQMSAGLKKIVVGHVLSCEPHPDSDHLHVCEVDVGEEEPFQIVCGAPNVAAGQYVIVALPNSRIADNVKIKKGKMRGVVSMGMICGLQEIGFADSVVPKEYVDGIFVFPEAIAPGTDVYEALGMTDYIIDLDLTANRADALGIHGVAHEVAAIESLTPHFEDVAVSESDVQTKNQLSAQVADEQLAPTYHLRMLQNVTVQPSPLWLQTRLWNAGIRPINNLVDVTNYMMLTYGQPLHAFDADTLTGDHKQIEVRLAKTGEKLTTLDEAEHDLTNEDIVITDGNQPIALAGVMGGFNSEITANTKNVIIEAAIFAPTAVRKTAQRHNLRSDASSRFEKGVNVADVQVALDAAAAMMAELGAGQVTAGVVSPTNLAPQPKVIQFDSARVNRVLGTDMSVQTMINLLERLGFEVANNADQLTVTIPARRWDIEIQADVIEEIARLYGYDNLPSTLPTGDMTTGALTTEQKALRRTRHTLEGAGLTQAISYALTTEEKAGQFTLAAKQTATVLDWPMTQDHAYLRMNLVTGLLDDAAYNVARKQTDLALYEQGRVFLQHADQARPNEVEYVAGLMSGNRQVKSWQEAAAPVDFYTIKGIVDTLMASYNLQAAVAYQATDAYPEMHPGRTAAIYVGETFVGIVGQIHPKIAKATHLKETYIFELDLAKILELQRQTIIAKPAPKFPEVTRDIALQVPEAITNADLVNAIKEKGGRYLVSVSLFDVYAGSHIEAGEKSMAYTLTYLNEDATLTEEEVNAAFEKVVAHLVATFQAKVR.

Positions 39–154 (SAGLKKIVVG…EAIAPGTDVY (116 aa)) constitute a tRNA-binding domain. One can recognise a B5 domain in the interval 410 to 485 (PQPKVIQFDS…RLYGYDNLPS (76 aa)). Mg(2+) contacts are provided by D463, D469, E472, and E473. The region spanning 713–806 (PKFPEVTRDI…LVATFQAKVR (94 aa)) is the FDX-ACB domain.

The protein belongs to the phenylalanyl-tRNA synthetase beta subunit family. Type 1 subfamily. In terms of assembly, tetramer of two alpha and two beta subunits. It depends on Mg(2+) as a cofactor.

It is found in the cytoplasm. It carries out the reaction tRNA(Phe) + L-phenylalanine + ATP = L-phenylalanyl-tRNA(Phe) + AMP + diphosphate + H(+). The polypeptide is Phenylalanine--tRNA ligase beta subunit (Latilactobacillus sakei subsp. sakei (strain 23K) (Lactobacillus sakei subsp. sakei)).